A 432-amino-acid chain; its full sequence is MGKNVVVLGTQWGDEGKGKIVDLLTERAKYVVRYQGGHNAGHTLVINGEKTVLHLIPSGILRENVTSIIGNGVVLSPAALMKEMKGLEDRGFPVRERLFISEACPLILEYHVALDVAREKARGAKAIGTTGRGIGPAYEDKVARRGLRVGDLFNKETFAAKLKEVMEYHNFQLVNYYKAEAVDYDKVLADVMAIADILTGMVVDVSELLDGARQRGDLIMFEGAQGTLLDIDHGTYPYVTSSNTTAGGVATGSGIGPRYVDYVLGIVKAYSTRVGAGPFPTELFDETGEFLCKQGNEFGATTGRRRRTGWLDAVAVRRAVQINSLSGFCMTKLDVLDGLKEVKLCVAYRMPDGSEVTTTPLAAEGWEGIEPIYETLPGWSETTFGVKTLDGLPQAARDYIKRVEEVTGVPVDIISTGPDRSETMILRDPFDA.

GTP is bound by residues 13-19 (GDEGKGK) and 41-43 (GHT). The active-site Proton acceptor is Asp14. 2 residues coordinate Mg(2+): Asp14 and Gly41. Residues 14-17 (DEGK), 39-42 (NAGH), Thr130, Arg144, Gln225, Thr240, and Arg304 contribute to the IMP site. His42 (proton donor) is an active-site residue. Position 300–306 (300–306 (ATTGRRR)) interacts with substrate. GTP contacts are provided by residues Arg306, 332 to 334 (KLD), and 415 to 417 (STG).

It belongs to the adenylosuccinate synthetase family. Homodimer. Requires Mg(2+) as cofactor.

It localises to the cytoplasm. The enzyme catalyses IMP + L-aspartate + GTP = N(6)-(1,2-dicarboxyethyl)-AMP + GDP + phosphate + 2 H(+). The protein operates within purine metabolism; AMP biosynthesis via de novo pathway; AMP from IMP: step 1/2. Its function is as follows. Plays an important role in the de novo pathway of purine nucleotide biosynthesis. Catalyzes the first committed step in the biosynthesis of AMP from IMP. In Erwinia tasmaniensis (strain DSM 17950 / CFBP 7177 / CIP 109463 / NCPPB 4357 / Et1/99), this protein is Adenylosuccinate synthetase.